We begin with the raw amino-acid sequence, 422 residues long: Serine/threonine-protein kinase H1 homolog (422 aa).

The tract at residues 35–80 (FIKYDGGGEKTGSPSPQGQSQAVAKVSQSPPPANDQPEPADSHRKK) is disordered. The segment covering 46 to 62 (GSPSPQGQSQAVAKVSQ) has biased composition (polar residues). One can recognise a Protein kinase domain in the interval 96 to 353 (YDIKALIGRG…AGQALKHPWI (258 aa)). ATP-binding positions include 102 to 110 (IGRGSFSRV) and lysine 125. Catalysis depends on aspartate 216, which acts as the Proton acceptor. A disordered region spans residues 376–422 (RASSRCHSTKSSQSTRSSRSTKSSKARRLREKELRELNRRYQQQCNG). Positions 384–396 (TKSSQSTRSSRST) are enriched in low complexity. The span at 405–414 (REKELRELNR) shows a compositional bias: basic and acidic residues.

This sequence belongs to the protein kinase superfamily. CAMK Ser/Thr protein kinase family.

The catalysed reaction is L-seryl-[protein] + ATP = O-phospho-L-seryl-[protein] + ADP + H(+). It catalyses the reaction L-threonyl-[protein] + ATP = O-phospho-L-threonyl-[protein] + ADP + H(+). The protein is Serine/threonine-protein kinase H1 homolog (pskh1) of Danio rerio (Zebrafish).